We begin with the raw amino-acid sequence, 466 residues long: Uronate isomerase (466 aa).

This sequence belongs to the metallo-dependent hydrolases superfamily. Uronate isomerase family.

The enzyme catalyses D-glucuronate = D-fructuronate. The catalysed reaction is aldehydo-D-galacturonate = keto-D-tagaturonate. It functions in the pathway carbohydrate metabolism; pentose and glucuronate interconversion. In Rhizorhabdus wittichii (strain DSM 6014 / CCUG 31198 / JCM 15750 / NBRC 105917 / EY 4224 / RW1) (Sphingomonas wittichii), this protein is Uronate isomerase.